Consider the following 575-residue polypeptide: Phosphoenolpyruvate-protein phosphotransferase (575 aa).

His189 serves as the catalytic Tele-phosphohistidine intermediate. Phosphoenolpyruvate is bound by residues Arg296 and Arg332. Positions 431 and 455 each coordinate Mg(2+). Phosphoenolpyruvate-binding positions include 454–455 (ND) and Arg465. The active-site Proton donor is the Cys502.

The protein belongs to the PEP-utilizing enzyme family. In terms of assembly, homodimer. Mg(2+) is required as a cofactor.

It localises to the cytoplasm. The enzyme catalyses L-histidyl-[protein] + phosphoenolpyruvate = N(pros)-phospho-L-histidyl-[protein] + pyruvate. General (non sugar-specific) component of the phosphoenolpyruvate-dependent sugar phosphotransferase system (sugar PTS). This major carbohydrate active-transport system catalyzes the phosphorylation of incoming sugar substrates concomitantly with their translocation across the cell membrane. Enzyme I transfers the phosphoryl group from phosphoenolpyruvate (PEP) to the phosphoryl carrier protein (HPr). The protein is Phosphoenolpyruvate-protein phosphotransferase (ptsI) of Salmonella typhimurium (strain LT2 / SGSC1412 / ATCC 700720).